The following is a 199-amino-acid chain: Thymidine kinase (199 aa).

Residues 15 to 22 and 88 to 91 each bind ATP; these read GSMFSGKS and DEIQ. The Proton acceptor role is filled by glutamate 89. Cysteine 145, cysteine 148, cysteine 183, and histidine 186 together coordinate Zn(2+).

It belongs to the thymidine kinase family. In terms of assembly, homotetramer.

It is found in the cytoplasm. It catalyses the reaction thymidine + ATP = dTMP + ADP + H(+). The sequence is that of Thymidine kinase from Staphylococcus haemolyticus (strain JCSC1435).